A 503-amino-acid polypeptide reads, in one-letter code: MEFSVKSGSPEKQRSACIVVGVFEPRRLSPIAEQLDKISDGYISALLRRGELEGKPGQTLLLHHVPNVLSERILLIGCGKERELDERQYKQVIQKTINTLNDTGSMEAVCFLTELHVKGRNTYWKVRQAVETAKESLYSFDQLKTTKSEPRRPLRKMVFNVPTRRELTSGERAIQHGLAIAAGIKAAKDLGNMPPNICNAGYLASQARQLADSYSKNIVTRVIGEQQMKELGMHSYLAVGNGSQNESLMSVIEYKGNPSEDARPIVLVGKGLTFDSGGISIKPAEGMDEMKYDMCGAAAVYGVMRMVAELQLPINVIGVLAGCENMPGGRAYRPGDVLTTMSGQTVEVLNTDAEGRLVLCDVLTYVERFEPEAVIDVATLTGACVIALGHHITGLMSNHNPLAHELIGASEQAGDRAWRLPLGDEYQEQLESNFADMANIGGRPGGAITAGCFLARFTRKYNWAHLDIAGTAWRSGKAKGATGRPVALLSQFLLNRAGFNGEE.

Positions 270 and 275 each coordinate Mn(2+). Lysine 282 is a catalytic residue. Residues aspartate 293, aspartate 352, and glutamate 354 each contribute to the Mn(2+) site. Arginine 356 is an active-site residue.

It belongs to the peptidase M17 family. It depends on Mn(2+) as a cofactor.

Its subcellular location is the cytoplasm. The enzyme catalyses Release of an N-terminal amino acid, Xaa-|-Yaa-, in which Xaa is preferably Leu, but may be other amino acids including Pro although not Arg or Lys, and Yaa may be Pro. Amino acid amides and methyl esters are also readily hydrolyzed, but rates on arylamides are exceedingly low.. It catalyses the reaction Release of an N-terminal amino acid, preferentially leucine, but not glutamic or aspartic acids.. Presumably involved in the processing and regular turnover of intracellular proteins. Catalyzes the removal of unsubstituted N-terminal amino acids from various peptides. This Enterobacter sp. (strain 638) protein is Probable cytosol aminopeptidase.